Here is a 316-residue protein sequence, read N- to C-terminus: Pantothenate kinase (316 aa).

An ATP-binding site is contributed by 95–102 (GSVSVGKS).

It belongs to the prokaryotic pantothenate kinase family.

The protein localises to the cytoplasm. The enzyme catalyses (R)-pantothenate + ATP = (R)-4'-phosphopantothenate + ADP + H(+). It functions in the pathway cofactor biosynthesis; coenzyme A biosynthesis; CoA from (R)-pantothenate: step 1/5. This Actinobacillus pleuropneumoniae serotype 7 (strain AP76) protein is Pantothenate kinase.